The following is a 51-amino-acid chain: Large ribosomal subunit protein eL39 (51 aa).

The interval 1-22 (MPSQKSFRTKQKLAKAQKQNRP) is disordered.

This sequence belongs to the eukaryotic ribosomal protein eL39 family. Interacts with YIH1.

This is Large ribosomal subunit protein eL39 (RPL39) from Debaryomyces hansenii (strain ATCC 36239 / CBS 767 / BCRC 21394 / JCM 1990 / NBRC 0083 / IGC 2968) (Yeast).